We begin with the raw amino-acid sequence, 541 residues long: Long-chain-fatty-acid--CoA ligase (541 aa).

Mg(2+) is bound at residue T184. Residues V231 and W234 each contribute to the ATP site. 4 residues coordinate tetradecanoyl-AMP: G302, Q322, G323, and T327. ATP is bound by residues G323 and T327. E328 is a Mg(2+) binding site. The ATP site is built by D418, K435, K439, and W444. Residues D418, K435, and K439 each contribute to the tetradecanoyl-AMP site.

Belongs to the ATP-dependent AMP-binding enzyme family. As to quaternary structure, forms a domain swapped homodimer. Mg(2+) serves as cofactor.

The catalysed reaction is a long-chain fatty acid + ATP + CoA = a long-chain fatty acyl-CoA + AMP + diphosphate. The enzyme catalyses tetradecanoate + ATP + CoA = tetradecanoyl-CoA + AMP + diphosphate. It carries out the reaction hexadecanoate + ATP + CoA = hexadecanoyl-CoA + AMP + diphosphate. It functions in the pathway lipid metabolism; fatty acid metabolism. Functionally, catalyzes the esterification of a number of long chain fatty acids with CoA, resulting in the formation of long-chain fatty acyl-CoA. Myristate (C14) is the most efficiently processed fatty acid, followed by palmitate (C16). Also catalyzes the esterification of stearate (C18) and laurate (C12), but at lower efficiency. Does not catalyze the esterification of the unsaturated fatty acids mysteroleic and palmitoleic acids in vitro. The sequence is that of Long-chain-fatty-acid--CoA ligase from Thermus thermophilus (strain ATCC 27634 / DSM 579 / HB8).